Reading from the N-terminus, the 438-residue chain is Glutamyl-tRNA(Gln) amidotransferase subunit D (438 aa).

The region spanning proline 92–asparagine 422 is the Asparaginase/glutaminase domain. Catalysis depends on residues threonine 102, threonine 178, aspartate 179, and lysine 256.

Belongs to the asparaginase 1 family. GatD subfamily. In terms of assembly, heterodimer of GatD and GatE.

The catalysed reaction is L-glutamyl-tRNA(Gln) + L-glutamine + ATP + H2O = L-glutaminyl-tRNA(Gln) + L-glutamate + ADP + phosphate + H(+). In terms of biological role, allows the formation of correctly charged Gln-tRNA(Gln) through the transamidation of misacylated Glu-tRNA(Gln) in organisms which lack glutaminyl-tRNA synthetase. The reaction takes place in the presence of glutamine and ATP through an activated gamma-phospho-Glu-tRNA(Gln). The GatDE system is specific for glutamate and does not act on aspartate. This Pyrococcus horikoshii (strain ATCC 700860 / DSM 12428 / JCM 9974 / NBRC 100139 / OT-3) protein is Glutamyl-tRNA(Gln) amidotransferase subunit D.